We begin with the raw amino-acid sequence, 342 residues long: Protein pelota homolog (342 aa).

Belongs to the eukaryotic release factor 1 family. Pelota subfamily. As to quaternary structure, monomer. Requires a divalent metal cation as cofactor.

The protein resides in the cytoplasm. Functionally, may function in recognizing stalled ribosomes, interact with stem-loop structures in stalled mRNA molecules, and effect endonucleolytic cleavage of the mRNA. May play a role in the release non-functional ribosomes and degradation of damaged mRNAs. Has endoribonuclease activity. This chain is Protein pelota homolog, found in Sulfolobus acidocaldarius (strain ATCC 33909 / DSM 639 / JCM 8929 / NBRC 15157 / NCIMB 11770).